Reading from the N-terminus, the 101-residue chain is NADH-quinone oxidoreductase subunit K (101 aa).

A run of 3 helical transmembrane segments spans residues 4-24 (LTHY…GIFM), 30-50 (LVLL…FIAF), and 61-81 (IFVF…LAIM).

It belongs to the complex I subunit 4L family. NDH-1 is composed of 14 different subunits. Subunits NuoA, H, J, K, L, M, N constitute the membrane sector of the complex.

It localises to the cell inner membrane. The enzyme catalyses a quinone + NADH + 5 H(+)(in) = a quinol + NAD(+) + 4 H(+)(out). Its function is as follows. NDH-1 shuttles electrons from NADH, via FMN and iron-sulfur (Fe-S) centers, to quinones in the respiratory chain. The immediate electron acceptor for the enzyme in this species is believed to be ubiquinone. Couples the redox reaction to proton translocation (for every two electrons transferred, four hydrogen ions are translocated across the cytoplasmic membrane), and thus conserves the redox energy in a proton gradient. This chain is NADH-quinone oxidoreductase subunit K, found in Neisseria meningitidis serogroup B (strain ATCC BAA-335 / MC58).